Reading from the N-terminus, the 528-residue chain is tRNA-2-methylthio-N(6)-dimethylallyladenosine synthase (528 aa).

The MTTase N-terminal domain maps to 19-134 (RTYEVRTYGC…LPTLLERARH (116 aa)). [4Fe-4S] cluster is bound by residues C28, C63, C97, C171, C175, and C178. Positions 157–387 (RDEIASGWVS…TALQERISHE (231 aa)) constitute a Radical SAM core domain. In terms of domain architecture, TRAM spans 390–460 (QRVVGRTVEV…PFHLIADSVD (71 aa)).

The protein belongs to the methylthiotransferase family. MiaB subfamily. As to quaternary structure, monomer. The cofactor is [4Fe-4S] cluster.

Its subcellular location is the cytoplasm. It carries out the reaction N(6)-dimethylallyladenosine(37) in tRNA + (sulfur carrier)-SH + AH2 + 2 S-adenosyl-L-methionine = 2-methylsulfanyl-N(6)-dimethylallyladenosine(37) in tRNA + (sulfur carrier)-H + 5'-deoxyadenosine + L-methionine + A + S-adenosyl-L-homocysteine + 2 H(+). Catalyzes the methylthiolation of N6-(dimethylallyl)adenosine (i(6)A), leading to the formation of 2-methylthio-N6-(dimethylallyl)adenosine (ms(2)i(6)A) at position 37 in tRNAs that read codons beginning with uridine. The sequence is that of tRNA-2-methylthio-N(6)-dimethylallyladenosine synthase from Clavibacter michiganensis subsp. michiganensis (strain NCPPB 382).